A 504-amino-acid chain; its full sequence is Xanthotoxol synthase (504 aa).

A helical transmembrane segment spans residues P3–H23. Residues P363–I368 are substrate specificity. C444 contacts heme.

This sequence belongs to the cytochrome P450 family. Heme is required as a cofactor.

The protein localises to the microsome membrane. The catalysed reaction is psoralen + reduced [NADPH--hemoprotein reductase] + O2 = xanthotoxol + oxidized [NADPH--hemoprotein reductase] + H2O + H(+). The enzyme catalyses 6-methoxycoumarin + reduced [NADPH--hemoprotein reductase] + O2 = scopoletin + oxidized [NADPH--hemoprotein reductase] + H2O + H(+). It functions in the pathway secondary metabolite biosynthesis. Its function is as follows. Involved in the biosynthesis of coumarins and furanocoumarins (FCs), natural products required for defense responses against attacks by predators with potential medical and agroindustrial usages such as anticoagulant, rodenticide and artificial vanilla substitutes. Catalyzes the conversion of psoralen into xanthotoxol and of 6-methoxycoumarin into scopoletin. Can also convert with a lower efficiency scopoletin into fraxetin and 7-methoxycoumarin into daphnetin-7-methylether, and use 7-methoxy-3-methylcoumarin as substrate. The sequence is that of Xanthotoxol synthase from Pastinaca sativa (Wild parsnip).